We begin with the raw amino-acid sequence, 756 residues long: Nucleomorphin (756 aa).

A compositionally biased stretch (polar residues) spans Met1–Ser10. The interval Met1–Ser113 is disordered. Composition is skewed to low complexity over residues Asn16 to Ser66 and Asn75 to Asn94. Polar residues predominate over residues Gly95–Ser113. The region spanning Leu124 to Val216 is the BRCT domain. 4 disordered regions span residues Asn229 to Gln251, Pro272 to Glu298, Lys359 to Asn403, and Thr422 to Leu463. 3 stretches are compositionally biased toward low complexity: residues Leu285–Glu298, Asn364–Lys401, and Thr422–Ser432. The segment covering Lys448 to His459 has biased composition (basic residues). The Nuclear localization signal signature appears at Lys464–Lys480. The interval Ala495–Lys512 is calmodulin binding. Positions Ser514 to Ile529 are enriched in polar residues. A disordered region spans residues Ser514 to Glu587. A compositionally biased stretch (acidic residues) spans Tyr536 to Glu587. Residues Asp537–Asp588 form a DEED region region. Calmodulin binding stretches follow at residues Val589–Lys606 and Lys596–His613. 2 disordered regions span residues His613–Arg639 and Leu660–Ile700. Residues Leu668–Thr691 are compositionally biased toward polar residues.

In terms of assembly, interacts with calmodulin and CBPD1 in the presence of Ca(2+).

The protein resides in the nucleus. The sequence is that of Nucleomorphin (numA) from Dictyostelium discoideum (Social amoeba).